The following is a 331-amino-acid chain: FFAAVEMRDNPALRDIPIAIGGSRERRGVISTANYPARKFGVRSAMPTGMALKLCPHLTLLPGRFDAYKEASNHIREIFSRYTSRIEPLSLDEAYLDVTDSVHCHGSATLIAQEIRQTIFNELQLTASAGIAPVKFLAKIASDMNKPNGQFVITPADVPAFLQTLPLAKIPGVGKVSAAKLEAMGLRTCGDVQKCDLVTLLKRFGKFGRILWERSQGIDERDVNSERLRKSVGVERTMAEDIHHWSECEAIIERLYPELERRLAKVKPDLLIARQGVKLKFDDFQQTTQEHVWPRLNKADLIATARKTWDERRGGRGVRLVGLHVTLLDPQ.

One can recognise a UmuC domain in the interval 1 to 174; it reads FFAAVEMRDN…LPLAKIPGVG (174 aa). D92 is a binding site for Mg(2+). E93 is a catalytic residue.

This sequence belongs to the DNA polymerase type-Y family. As to quaternary structure, monomer. Mg(2+) serves as cofactor.

It localises to the cytoplasm. The enzyme catalyses DNA(n) + a 2'-deoxyribonucleoside 5'-triphosphate = DNA(n+1) + diphosphate. Functionally, poorly processive, error-prone DNA polymerase involved in untargeted mutagenesis. Copies undamaged DNA at stalled replication forks, which arise in vivo from mismatched or misaligned primer ends. These misaligned primers can be extended by PolIV. Exhibits no 3'-5' exonuclease (proofreading) activity. May be involved in translesional synthesis, in conjunction with the beta clamp from PolIII. This chain is DNA polymerase IV, found in Escherichia fergusonii.